The chain runs to 148 residues: Secretory phospholipase A2 (148 aa).

The signal sequence occupies residues 1-23 (MKLSVLLALGASSLAAAAPAATA). Residue Asn61 is glycosylated (N-linked (GlcNAc...) asparagine). A disulfide bond links Cys62 and Cys78. His81 is an active-site residue. Asp82 serves as a coordination point for Ca(2+).

It belongs to the phospholipase A2 family. The cofactor is Ca(2+).

It localises to the secreted. The catalysed reaction is a 1,2-diacyl-sn-glycero-3-phosphocholine + H2O = a 1-acyl-sn-glycero-3-phosphocholine + a fatty acid + H(+). In terms of biological role, secretory phospholipase that catalyzes the calcium-dependent hydrolysis of the 2-acyl groups in 3-sn-phosphoglycerides. Increases the ability to utilize host-derived nutrients and lipids, and promotes lipid dropplets accumulation. Plays a role in virulence. The protein is Secretory phospholipase A2 of Arthroderma benhamiae (strain ATCC MYA-4681 / CBS 112371) (Trichophyton mentagrophytes).